The sequence spans 407 residues: SERPINE1 mRNA-binding protein 1 (407 aa).

Phosphoserine is present on Ser-25. The segment at 33 to 227 (AAENKKKEAG…GSGSHNWGTV (195 aa)) is disordered. The span at 51-68 (AKSAAQAAAQTNSNAAGK) shows a compositional bias: low complexity. N6-acetyllysine; alternate is present on Lys-52. Lys-52 is covalently cross-linked (Glycyl lysine isopeptide (Lys-Gly) (interchain with G-Cter in SUMO1); alternate). Lys-68 is modified (N6-acetyllysine). Basic and acidic residues-rich tracts occupy residues 70–80 (LRKESQKDRKN), 89–114 (ADKK…RRPD), and 122–162 (KLID…ERPI). Lys-102 participates in a covalent cross-link: Glycyl lysine isopeptide (Lys-Gly) (interchain with G-Cter in SUMO2). Residues Lys-122 and Lys-140 each carry the N6-acetyllysine modification. Residues 164–182 (GRGGLGRGRGGRGRGMGRG) are compositionally biased toward gly residues. Arg-165 and Arg-188 each carry omega-N-methylarginine. A compositionally biased stretch (basic and acidic residues) spans 183–199 (DGFDSRGKREFDRHSGS). 5 positions are modified to phosphoserine: Ser-197, Ser-199, Ser-203, Ser-205, and Ser-208. Lys-211 is modified (N6-acetyllysine; alternate). Lys-211 is covalently cross-linked (Glycyl lysine isopeptide (Lys-Gly) (interchain with G-Cter in SUMO2); alternate). Arg-216 carries the post-translational modification Omega-N-methylarginine. A Phosphoserine modification is found at Ser-221. The residue at position 226 (Thr-226) is a Phosphothreonine. A Glycyl lysine isopeptide (Lys-Gly) (interchain with G-Cter in SUMO1); alternate cross-link involves residue Lys-228. Lys-228 is covalently cross-linked (Glycyl lysine isopeptide (Lys-Gly) (interchain with G-Cter in SUMO2); alternate). Residues Leu-231, Ser-234, and Tyr-237 each carry the phosphoserine modification. Phosphothreonine is present on Ser-234. Lys-240 is modified (phosphothreonine). Residues 242–256 (ISYNCSDLDQSNVTE) are compositionally biased toward polar residues. 2 disordered regions span residues 242–288 (ISYN…KEMT) and 327–407 (SKSE…PALA). Basic and acidic residues predominate over residues 261–274 (GEEHPVADTENKEN). Residue Lys-280 forms a Glycyl lysine isopeptide (Lys-Gly) (interchain with G-Cter in SUMO2) linkage. The segment covering 327–341 (SKSEEAHAEDSVMDH) has biased composition (basic and acidic residues). The residue at position 328 (Lys-328) is an N6-acetyllysine. Ser-329 is modified (phosphoserine). Over residues 362–371 (GRPGRGGRGG) the composition is skewed to gly residues. 3 positions are modified to omega-N-methylarginine: Arg-363, Arg-366, and Arg-369. Phosphoserine occurs at positions 391 and 393.

Belongs to the SERBP1-HABP4 family. As to quaternary structure, associates with mature 80S ribosomes. Interacts with EEF2/eEF2; interaction sequesters EEF2/eEF2 at the A-site of the ribosome, thereby blocking the interaction sites of the mRNA-tRNA complex, promoting ribosome stabilization and hibernation. Interacts with SPIN1. Interacts with CHD3 and TDRD3. Interacts with ZDHHC17 (via ANK repeats). Post-translationally, phosphorylation by MTOR inhibits SERBP1 and relieves ribosome hibernation.

It is found in the cytoplasm. Its subcellular location is the nucleus. It localises to the perinuclear region. Its function is as follows. Ribosome-binding protein that promotes ribosome hibernation, a process during which ribosomes are stabilized in an inactive state and preserved from proteasomal degradation. Acts via its association with EEF2/eEF2 factor, sequestering EEF2/eEF2 at the A-site of the ribosome and promoting ribosome stabilization and storage in an inactive state. May also play a role in the regulation of mRNA stability: binds to the 3'-most 134 nt of the SERPINE1/PAI1 mRNA, a region which confers cyclic nucleotide regulation of message decay. Seems to play a role in PML-nuclear bodies formation. The polypeptide is SERPINE1 mRNA-binding protein 1 (Mus musculus (Mouse)).